A 546-amino-acid chain; its full sequence is MSDPQAALRASWKAVVSDLLAQSEQPNSDVPNFSHSQRLNLQLVEPIMIGDGYALIAAPHENAKTVIETELGEYITRALSQHMGRPCSLAVTIAAPPQPAPQEEPPAPAPQRPIQTEAPEHGMGHQTQAFQQPTQSTQPAPASQPETPNHHQPRSWEAAHSPASLDELAQHYSEQQSTAPSGYPEATGARIPREEPAHNPNREKSLNPKHTFENFVIGSSNRFANGAAVAVAENPARAYNPLFIWGGSGLGKTHLLHAAGNYAQVLHPGLRVKYVSSEEFTNDYINSLRDDRQESFKRRYRNLDILMVDDIQFLEGKESTQEEFFHTFNALHQANKQIILSSDRPPKQLTTLEDRLRTRFEGGLITDIQPPDLETRIAILMKKASADGTDVDRSVLELIASRFESSIRELEGALIRVSAYSSLVNEPISLEMAEIALHDLAPDSADRQITAAAIIEVTADYFNIDVDTLRGSGKKRAVAHARQLAMYLCRELTELSLPKIGDQFGGKDHTTVIYADRKIRKEMTENRNTYDEIQALTQRVKNHNQR.

A domain I, interacts with DnaA modulators region spans residues 1 to 85 (MSDPQAALRA…TRALSQHMGR (85 aa)). The segment at 85 to 204 (RPCSLAVTIA…EPAHNPNREK (120 aa)) is domain II. Residues 96–111 (PPQPAPQEEPPAPAPQ) are compositionally biased toward pro residues. Positions 96 to 209 (PPQPAPQEEP…PNREKSLNPK (114 aa)) are disordered. Over residues 126–145 (QTQAFQQPTQSTQPAPASQP) the composition is skewed to low complexity. Residues 191–209 (IPREEPAHNPNREKSLNPK) are compositionally biased toward basic and acidic residues. The interval 205 to 421 (SLNPKHTFEN…GALIRVSAYS (217 aa)) is domain III, AAA+ region. The ATP site is built by G249, G251, K252, and T253. The tract at residues 422-546 (SLVNEPISLE…TQRVKNHNQR (125 aa)) is domain IV, binds dsDNA.

It belongs to the DnaA family. As to quaternary structure, oligomerizes as a right-handed, spiral filament on DNA at oriC.

Its subcellular location is the cytoplasm. Plays an essential role in the initiation and regulation of chromosomal replication. ATP-DnaA binds to the origin of replication (oriC) to initiate formation of the DNA replication initiation complex once per cell cycle. Binds the DnaA box (a 9 base pair repeat at the origin) and separates the double-stranded (ds)DNA. Forms a right-handed helical filament on oriC DNA; dsDNA binds to the exterior of the filament while single-stranded (ss)DNA is stabiized in the filament's interior. The ATP-DnaA-oriC complex binds and stabilizes one strand of the AT-rich DNA unwinding element (DUE), permitting loading of DNA polymerase. After initiation quickly degrades to an ADP-DnaA complex that is not apt for DNA replication. Binds acidic phospholipids. The sequence is that of Chromosomal replication initiator protein DnaA from Corynebacterium aurimucosum (strain ATCC 700975 / DSM 44827 / CIP 107346 / CN-1) (Corynebacterium nigricans).